We begin with the raw amino-acid sequence, 33 residues long: Photosystem II reaction center protein Psb30 (33 aa).

A helical transmembrane segment spans residues 5–25 (VLAQLTVLTLIVISGPLVIAL).

The protein belongs to the Psb30/Ycf12 family. PSII is composed of 1 copy each of membrane proteins PsbA, PsbB, PsbC, PsbD, PsbE, PsbF, PsbH, PsbI, PsbJ, PsbK, PsbL, PsbM, PsbT, PsbX, PsbY, PsbZ, Psb30/Ycf12, peripheral proteins of the oxygen-evolving complex and a large number of cofactors. It forms dimeric complexes.

It localises to the plastid. The protein localises to the chloroplast thylakoid membrane. A core subunit of photosystem II (PSII), probably helps stabilize the reaction center. This is Photosystem II reaction center protein Psb30 from Cycas taitungensis (Prince sago).